Reading from the N-terminus, the 861-residue chain is Alpha-actinin A (861 aa).

Positions 1 to 239 (MSEEPTPVSG…VMTYVAQYYH (239 aa)) are actin-binding. 2 consecutive Calponin-homology (CH) domains span residues 22-127 (ITQK…LRFA) and 136-242 (LSAK…HHFS). Spectrin repeat units lie at residues 240-365 (HFSA…ALEK), 366-480 (AEQE…TGVK), 481-601 (SSAE…EERK), and 602-714 (VQLA…EQVV). EF-hand domains lie at 729-764 (EELSEFKACFSHFDKDNDNKLNRLEFSSCLKSIGDE) and 765-800 (LTEEQLNQVISKIDTDGNGTISFEEFIDYMVSSRKG). Ca(2+)-binding residues include Asp-742, Asp-744, Asp-746, Lys-748, Glu-753, Asp-778, Asp-780, Asn-782, Thr-784, and Glu-789.

This sequence belongs to the alpha-actinin family. As to quaternary structure, homodimer; antiparallel.

The protein resides in the cytoplasm. It is found in the cell cortex. It localises to the contractile vacuole. Its subcellular location is the cytoplasmic vesicle. The protein localises to the phagosome. F-actin cross-linking protein which is thought to anchor actin to a variety of intracellular structures. This is a bundling protein. Increases the actin-stimulated ATPase activity of myosin. Involved in vegetative cell growth, phagocytosis, motility and development, probably through stabilization of the actin network in the cortical cytoskeleton. The polypeptide is Alpha-actinin A (abpA) (Dictyostelium discoideum (Social amoeba)).